The following is a 507-amino-acid chain: FAD-linked oxidoreductase OXR1 (507 aa).

The signal sequence occupies residues 1-21; sequence MTIKFASLILAGLGLGSGALG. Asparagine 34 and asparagine 65 each carry an N-linked (GlcNAc...) asparagine glycan. Residues 73–245 form the FAD-binding PCMH-type domain; the sequence is YAPPTFKVSV…VSATYKLKPL (173 aa). N-linked (GlcNAc...) asparagine glycans are attached at residues asparagine 263 and asparagine 288.

The protein belongs to the oxygen-dependent FAD-linked oxidoreductase family. Requires FAD as cofactor.

The enzyme catalyses dihydropyriculol + A = pyriculol + AH2. It catalyses the reaction dihydropyriculariol + A = pyriculariol + AH2. Its pathway is polyketide biosynthesis. Its function is as follows. FAD-linked oxidoreductase; part of the gene cluster that mediates the biosynthesis of pyriculol and pyriculariol, two heptaketides that induce lesion formation upon application on rice leaves but are dispensable for pathogenicity. The highly reducing polyketide synthase synthesizes the heptaketide backbone of pyriculol and pyriculariol. Pyriculol and pyriculariol contain several hydroxyl moieties and double bonds, so it can be assumed that several reduction steps occur during biosynthesis. These reactions could be executed by PKS19 itself or partly by the tailoring enzymes OXR1, OXR2, RED1, RED2 or RED3, identified within the cluster. The FAD-linked oxidoreductase OXR1 is the only tailoring enzyme for which the function has been determined yet, and is involved in the oxidation of dihydropyriculol and dihydropyriculariol into pyriculol and pyriculariol, respectively. The polypeptide is FAD-linked oxidoreductase OXR1 (Pyricularia oryzae (strain 70-15 / ATCC MYA-4617 / FGSC 8958) (Rice blast fungus)).